Here is a 460-residue protein sequence, read N- to C-terminus: UDP-N-acetylmuramoylalanine--D-glutamate ligase (460 aa).

115–121 contributes to the ATP binding site; the sequence is GTDGKTT.

The protein belongs to the MurCDEF family.

Its subcellular location is the cytoplasm. It catalyses the reaction UDP-N-acetyl-alpha-D-muramoyl-L-alanine + D-glutamate + ATP = UDP-N-acetyl-alpha-D-muramoyl-L-alanyl-D-glutamate + ADP + phosphate + H(+). The protein operates within cell wall biogenesis; peptidoglycan biosynthesis. Its function is as follows. Cell wall formation. Catalyzes the addition of glutamate to the nucleotide precursor UDP-N-acetylmuramoyl-L-alanine (UMA). The polypeptide is UDP-N-acetylmuramoylalanine--D-glutamate ligase (Chlorobium luteolum (strain DSM 273 / BCRC 81028 / 2530) (Pelodictyon luteolum)).